We begin with the raw amino-acid sequence, 148 residues long: Homoprotocatechuate degradative operon repressor (148 aa).

One can recognise an HTH marR-type domain in the interval 2–134 (HDSLTIALLQ…LTHLLEEFIA (133 aa)).

Its function is as follows. Repressor for the homoprotocatechuate catabolic pathway hpc operon. The sequence is that of Homoprotocatechuate degradative operon repressor (hpcR) from Escherichia coli.